We begin with the raw amino-acid sequence, 564 residues long: Probable pectinesterase/pectinesterase inhibitor 46 (564 aa).

The chain crosses the membrane as a helical span at residues 25-45 (IAIIAISSIVLVCIVVGAVVG). The interval 62–207 (EPISVSVKAL…TEMTSNALAI (146 aa)) is pectinesterase inhibitor 46. 4 N-linked (GlcNAc...) asparagine glycosylation sites follow: Asn-90, Asn-126, Asn-147, and Asn-196. Positions 257 to 550 (TIVVAKDGSG…FTVKPFIDGN (294 aa)) are pectinesterase 46. Residues Thr-332 and Gln-362 each contribute to the substrate site. Asp-385 functions as the Proton donor; for pectinesterase activity in the catalytic mechanism. The cysteines at positions 399 and 419 are disulfide-linked. Asp-406 acts as the Nucleophile; for pectinesterase activity in catalysis. 2 N-linked (GlcNAc...) asparagine glycosylation sites follow: Asn-452 and Asn-460. Arg-470 and Trp-472 together coordinate substrate.

The protein in the N-terminal section; belongs to the PMEI family. This sequence in the C-terminal section; belongs to the pectinesterase family.

Its subcellular location is the membrane. It carries out the reaction [(1-&gt;4)-alpha-D-galacturonosyl methyl ester](n) + n H2O = [(1-&gt;4)-alpha-D-galacturonosyl](n) + n methanol + n H(+). It functions in the pathway glycan metabolism; pectin degradation; 2-dehydro-3-deoxy-D-gluconate from pectin: step 1/5. Acts in the modification of cell walls via demethylesterification of cell wall pectin. The polypeptide is Probable pectinesterase/pectinesterase inhibitor 46 (PME46) (Arabidopsis thaliana (Mouse-ear cress)).